The chain runs to 260 residues: Carbonic anhydrase 2 (260 aa).

Residues 3–259 (HHWGYDSHNG…LKSREVRASF (257 aa)) form the Alpha-carbonic anhydrase domain. The active-site Proton donor/acceptor is the His64. Zn(2+) contacts are provided by His94, His96, and His119. 198-199 (TT) provides a ligand contact to substrate.

It belongs to the alpha-carbonic anhydrase family. It depends on Zn(2+) as a cofactor.

The protein localises to the cytoplasm. Its subcellular location is the cell membrane. It catalyses the reaction hydrogencarbonate + H(+) = CO2 + H2O. The enzyme catalyses urea = cyanamide + H2O. With respect to regulation, inhibited by acetazolamide. Catalyzes the reversible hydration of carbon dioxide. Can also hydrate cyanamide to urea. This Gallus gallus (Chicken) protein is Carbonic anhydrase 2 (CA2).